The sequence spans 280 residues: Pantothenate synthetase (280 aa).

31–38 is an ATP binding site; the sequence is MGNLHAGH. The active-site Proton donor is the His38. Gln62 is a (R)-pantoate binding site. Gln62 is a binding site for beta-alanine. 150–153 contributes to the ATP binding site; it reads GKKD. A (R)-pantoate-binding site is contributed by Gln156. ATP-binding positions include Val179 and 187-190; that span reads MSSR.

This sequence belongs to the pantothenate synthetase family. As to quaternary structure, homodimer.

Its subcellular location is the cytoplasm. The enzyme catalyses (R)-pantoate + beta-alanine + ATP = (R)-pantothenate + AMP + diphosphate + H(+). The protein operates within cofactor biosynthesis; (R)-pantothenate biosynthesis; (R)-pantothenate from (R)-pantoate and beta-alanine: step 1/1. Functionally, catalyzes the condensation of pantoate with beta-alanine in an ATP-dependent reaction via a pantoyl-adenylate intermediate. In Xanthomonas axonopodis pv. citri (strain 306), this protein is Pantothenate synthetase.